The following is a 139-amino-acid chain: Large ribosomal subunit protein uL16c (139 aa).

Positions 1–20 (MLSPKRTKYRKHHRGRMKGK) are disordered.

It belongs to the universal ribosomal protein uL16 family. As to quaternary structure, part of the 50S ribosomal subunit.

It localises to the plastid. The protein resides in the chloroplast. The protein is Large ribosomal subunit protein uL16c of Pleurastrum terricola (Filamentous green alga).